Here is a 621-residue protein sequence, read N- to C-terminus: ATP-dependent lipid A-core flippase (621 aa).

Transmembrane regions (helical) follow at residues 32 to 52 (IVAA…LAAF), 91 to 111 (VWGT…LVVI), 192 to 212 (IVLL…FPLL), 286 to 306 (SPFS…IALW), and 312 to 332 (YTTI…YAPI). Residues 33-344 (VAALIAIFGV…LANISIPMQT (312 aa)) form the ABC transmembrane type-1 domain. Residues 378–611 (FRNVDVEYRS…NGYYTMLRNI (234 aa)) form the ABC transporter domain. 410-417 (GRSGSGKS) is an ATP binding site.

The protein belongs to the ABC transporter superfamily. Lipid exporter (TC 3.A.1.106) family. As to quaternary structure, homodimer.

It is found in the cell inner membrane. The enzyme catalyses ATP + H2O + lipid A-core oligosaccharideSide 1 = ADP + phosphate + lipid A-core oligosaccharideSide 2.. Involved in lipopolysaccharide (LPS) biosynthesis. Translocates lipid A-core from the inner to the outer leaflet of the inner membrane. Transmembrane domains (TMD) form a pore in the inner membrane and the ATP-binding domain (NBD) is responsible for energy generation. In Neisseria meningitidis serogroup B (strain ATCC BAA-335 / MC58), this protein is ATP-dependent lipid A-core flippase.